The chain runs to 872 residues: Eukaryotic translation initiation factor 3 subunit C (872 aa).

Residues 1 to 100 (MSRFFRGGDD…KVKSAKDKRF (100 aa)) form a disordered region. 2 stretches are compositionally biased toward acidic residues: residues 16–59 (SSEE…DEEE) and 72–87 (SDDE…SDDE). Residues 88-100 (ATTKVKSAKDKRF) show a composition bias toward basic and acidic residues. In terms of domain architecture, PCI spans 613–787 (FHMHINLELL…ETVIFRKGVE (175 aa)). Residues 812 to 872 (TLEQKTQGSA…GGALGNAVRG (61 aa)) are disordered. Positions 831–848 (GGGQRGGGQRGGRGGART) are enriched in gly residues.

This sequence belongs to the eIF-3 subunit C family. As to quaternary structure, component of the eukaryotic translation initiation factor 3 (eIF-3) complex.

The protein localises to the cytoplasm. Functionally, component of the eukaryotic translation initiation factor 3 (eIF-3) complex, which is involved in protein synthesis of a specialized repertoire of mRNAs and, together with other initiation factors, stimulates binding of mRNA and methionyl-tRNAi to the 40S ribosome. The eIF-3 complex specifically targets and initiates translation of a subset of mRNAs involved in cell proliferation. The protein is Eukaryotic translation initiation factor 3 subunit C (nip-1) of Neurospora crassa (strain ATCC 24698 / 74-OR23-1A / CBS 708.71 / DSM 1257 / FGSC 987).